The following is a 397-amino-acid chain: Lysosomal acid lipase/cholesteryl ester hydrolase (397 aa).

The signal sequence occupies residues 1–25; that stretch reads MQLLGRVICFVVGILLSGGPTGTIS. The propeptide at 26–72 is removed in mature form; sequence AVDPEANMNVTEIIMHWGYPEHSVQTGDGYILGVHRIPHGRKNQFDK. N-linked (GlcNAc...) asparagine glycosylation is found at Asn-34, Asn-99, and Asn-159. Residues 84–378 enclose the AB hydrolase-1 domain; the sequence is HGFLADSSNW…EWDHLDFIWG (295 aa). Catalysis depends on Ser-172, which acts as the Charge relay system. Residues Asn-271 and Asn-319 are each glycosylated (N-linked (GlcNAc...) asparagine). The active-site Charge relay system is His-372.

This sequence belongs to the AB hydrolase superfamily. Lipase family. As to quaternary structure, monomer. Post-translationally, glycosylation is not essential for catalytic activity.

It localises to the lysosome. The catalysed reaction is a sterol ester + H2O = a sterol + a fatty acid + H(+). It catalyses the reaction cholesteryl (9Z-octadecenoate) + H2O = cholesterol + (9Z)-octadecenoate + H(+). It carries out the reaction a triacylglycerol + H2O = a 1,2-diacylglycerol + a fatty acid + H(+). The enzyme catalyses 1,2-di-(9Z-octadecenoyl)-glycerol + (9Z)-octadecenoate + H(+) = 1,2,3-tri-(9Z-octadecenoyl)-glycerol + H2O. The catalysed reaction is a 1,2-diacylglycerol + H2O = a 1-acylglycerol + a fatty acid + H(+). It catalyses the reaction 1,2-di-(9Z-octadecenoyl)-glycerol + H2O = 1-(9Z-octadecenoyl)-glycerol + (9Z)-octadecenoate + H(+). It carries out the reaction a 1,3-diacylglycerol + H2O = a 1-acylglycerol + a fatty acid + H(+). The enzyme catalyses 1,3-di-(9Z-octadecenoyl)-glycerol + H2O = 1-(9Z-octadecenoyl)-glycerol + (9Z)-octadecenoate + H(+). Catalyzes the deacylation of cholesteryl ester core lipids of endocytosed low density lipoproteins to generate free fatty acids and cholesterol. Hydrolyzes triglycerides (1,2,3-triacylglycerol) and diglycerides (such as 1,2-diacylglycerol and 1,3-diacylglycerol) with preference for the acyl moieties at the sn-1 or sn-3 positions. The protein is Lysosomal acid lipase/cholesteryl ester hydrolase (Lipa) of Rattus norvegicus (Rat).